A 584-amino-acid polypeptide reads, in one-letter code: Galectin-3-binding protein (584 aa).

A signal peptide spans 1-18 (MTPPRLFWVWLLVAGTQG). In terms of domain architecture, SRCR spans 24 to 124 (MRLADGGATN…HERDAGVVCT (101 aa)). Cystine bridges form between cysteine 49/cysteine 113, cysteine 62/cysteine 123, and cysteine 93/cysteine 103. Asparagine 69 carries N-linked (GlcNAc...) asparagine glycosylation. Residues asparagine 125 and asparagine 192 are each glycosylated (N-linked (GlcNAc...) asparagine). The region spanning 153 to 221 (CDLSISVNVQ…FYSRRIDITL (69 aa)) is the BTB domain. A BACK domain is found at 260 to 359 (PLDLYAYAVA…MLPEELFELQ (100 aa)). Residues asparagine 361, asparagine 397, asparagine 550, and asparagine 579 are each glycosylated (N-linked (GlcNAc...) asparagine).

As to quaternary structure, homodimers and homomultimers. The multimers form ring-like structures with a diameter of 30-40 nm. Binds LGALS1 and LGALS3. Binds ITGB1, COL4A1, COL5A1, COL6A1, FN1 and NID. Interacts with the gamma-tubulin ring complex (gamma-TuRC), composed of gamma-tubulin, TUBGCP2, TUBGCP3, TUBGCP4, TUBGCP5 and TUBGCP6. The unglycosylated form interacts with PDE4DIP; this interaction, which is PDE4DIP isoform-specific, may connect a pericentrosomal complex, made of AKAP9, CDK5RAP2, EB1/MAPRE1 and PDE4DIP, to the gamma-tubulin ring complex (gamma-TuRC) to promote microtubule assembly and acetylation.

It is found in the secreted. It localises to the extracellular space. The protein resides in the extracellular matrix. In terms of biological role, promotes integrin-mediated cell adhesion. May stimulate host defense against viruses and tumor cells. This Pongo abelii (Sumatran orangutan) protein is Galectin-3-binding protein (LGALS3BP).